We begin with the raw amino-acid sequence, 334 residues long: GTP 3',8-cyclase (334 aa).

One can recognise a Radical SAM core domain in the interval 13–239 (KFHRKFYYLR…KVRSHHDGPA (227 aa)). Residue Arg-22 participates in GTP binding. [4Fe-4S] cluster is bound by residues Cys-29 and Cys-33. Tyr-35 serves as a coordination point for S-adenosyl-L-methionine. Cys-36 contacts [4Fe-4S] cluster. Arg-73 serves as a coordination point for GTP. Gly-77 serves as a coordination point for S-adenosyl-L-methionine. Residue Thr-104 participates in GTP binding. Residue Ser-128 participates in S-adenosyl-L-methionine binding. Lys-165 contributes to the GTP binding site. Met-199 lines the S-adenosyl-L-methionine pocket. Residues Cys-262 and Cys-265 each contribute to the [4Fe-4S] cluster site. 267–269 (RLR) serves as a coordination point for GTP. [4Fe-4S] cluster is bound at residue Cys-279.

It belongs to the radical SAM superfamily. MoaA family. Monomer and homodimer. The cofactor is [4Fe-4S] cluster.

The enzyme catalyses GTP + AH2 + S-adenosyl-L-methionine = (8S)-3',8-cyclo-7,8-dihydroguanosine 5'-triphosphate + 5'-deoxyadenosine + L-methionine + A + H(+). It functions in the pathway cofactor biosynthesis; molybdopterin biosynthesis. Its function is as follows. Catalyzes the cyclization of GTP to (8S)-3',8-cyclo-7,8-dihydroguanosine 5'-triphosphate. The protein is GTP 3',8-cyclase of Vibrio parahaemolyticus serotype O3:K6 (strain RIMD 2210633).